Here is a 675-residue protein sequence, read N- to C-terminus: Secretogranin-1 (675 aa).

Residues methionine 1 to serine 20 form the signal peptide. A disulfide bridge links cysteine 36 with cysteine 57. Residues serine 64–serine 90 show a composition bias toward basic and acidic residues. Disordered regions lie at residues serine 64–threonine 507 and asparagine 528–threonine 555. Phosphoserine occurs at positions 93, 99, 100, 129, and 147. The O-linked (Xyl...) (chondroitin sulfate) serine glycan is linked to serine 93. 2 stretches are compositionally biased toward basic and acidic residues: residues lysine 148–lysine 161 and glycine 168–glutamate 248. Serine 190 is modified (phosphoserine). Serine 236 carries an O-linked (Xyl...) (chondroitin sulfate) serine glycan. Residues proline 250 to alanine 269 show a composition bias toward acidic residues. Phosphoserine is present on residues serine 255, serine 259, serine 291, serine 309, and serine 333. Basic and acidic residues predominate over residues tyrosine 292–aspartate 311. A Sulfotyrosine modification is found at tyrosine 339. Composition is skewed to basic and acidic residues over residues glycine 361–lysine 410 and serine 429–lysine 452. 4 positions are modified to phosphoserine: serine 362, serine 372, serine 375, and serine 397. Sulfotyrosine is present on tyrosine 469. Phosphoserine occurs at positions 490, 529, and 540. Tyrosine 563 bears the Sulfotyrosine mark. A disordered region spans residues aspartate 620–leucine 646. Residue tyrosine 622 is modified to Sulfotyrosine; partial. The residue at position 624 (serine 624) is a Phosphoserine. A compositionally biased stretch (basic and acidic residues) spans glutamate 637–leucine 646. At arginine 674 the chain carries Arginine amide; in CCB peptide short form.

The protein belongs to the chromogranin/secretogranin protein family. As to quaternary structure, interacts with ITPR1 in the secretory granules. In terms of processing, extensively processed in glucagonoma tissue by limited proteolysis at conserved basic residues. Alternative processing are seen in different tissues. The proglucagon-converting enzymes present in transformed alpha-cells are likely candidates to be involved in tissue-specific processing. As to expression, expressed in the brain, adrenal medulla and anterior pituitary. In the brain, localized to the hippocampal formation, the endocrine hypothalamus, the olfactory system, and in anatomically distinct structures in the pons-medulla.

The protein resides in the secreted. Its function is as follows. Secretogranin-1 is a neuroendocrine secretory granule protein, which may be the precursor for other biologically active peptides. This chain is Secretogranin-1 (Chgb), found in Rattus norvegicus (Rat).